The following is a 204-amino-acid chain: Urease accessory protein UreE (204 aa).

The span at 172-190 shows a compositional bias: basic and acidic residues; the sequence is HGHAHSHDHDHDHDHDHQH. Residues 172-204 form a disordered region; the sequence is HGHAHSHDHDHDHDHDHQHGPGCTHGHHGHDHH.

Belongs to the UreE family.

The protein resides in the cytoplasm. Involved in urease metallocenter assembly. Binds nickel. Probably functions as a nickel donor during metallocenter assembly. This Burkholderia orbicola (strain AU 1054) protein is Urease accessory protein UreE.